We begin with the raw amino-acid sequence, 101 residues long: Large ribosomal subunit protein uL24 (101 aa).

This sequence belongs to the universal ribosomal protein uL24 family. As to quaternary structure, part of the 50S ribosomal subunit.

Its function is as follows. One of two assembly initiator proteins, it binds directly to the 5'-end of the 23S rRNA, where it nucleates assembly of the 50S subunit. One of the proteins that surrounds the polypeptide exit tunnel on the outside of the subunit. In Borrelia recurrentis (strain A1), this protein is Large ribosomal subunit protein uL24.